The primary structure comprises 257 residues: 1-(5-phosphoribosyl)-5-[(5-phosphoribosylamino)methylideneamino] imidazole-4-carboxamide isomerase (257 aa).

The active-site Proton acceptor is D8. The Proton donor role is filled by D129.

The protein belongs to the HisA/HisF family.

It localises to the cytoplasm. It catalyses the reaction 1-(5-phospho-beta-D-ribosyl)-5-[(5-phospho-beta-D-ribosylamino)methylideneamino]imidazole-4-carboxamide = 5-[(5-phospho-1-deoxy-D-ribulos-1-ylimino)methylamino]-1-(5-phospho-beta-D-ribosyl)imidazole-4-carboxamide. The protein operates within amino-acid biosynthesis; L-histidine biosynthesis; L-histidine from 5-phospho-alpha-D-ribose 1-diphosphate: step 4/9. This chain is 1-(5-phosphoribosyl)-5-[(5-phosphoribosylamino)methylideneamino] imidazole-4-carboxamide isomerase, found in Rippkaea orientalis (strain PCC 8801 / RF-1) (Cyanothece sp. (strain PCC 8801)).